The following is a 406-amino-acid chain: Serine/threonine transporter SstT (406 aa).

9 helical membrane-spanning segments follow: residues 21-41 (LIIG…VAIL), 45-65 (FVGA…MGAI), 79-99 (ILIL…IASF), 138-158 (ALMN…GLAL), 179-199 (VVKW…FDSI), 213-233 (LLLL…PLIV), 285-305 (ISIP…IAVL), 313-333 (LGIT…AIAA), and 360-380 (IAMQ…SCET).

The protein belongs to the dicarboxylate/amino acid:cation symporter (DAACS) (TC 2.A.23) family.

The protein localises to the cell membrane. The enzyme catalyses L-serine(in) + Na(+)(in) = L-serine(out) + Na(+)(out). The catalysed reaction is L-threonine(in) + Na(+)(in) = L-threonine(out) + Na(+)(out). Functionally, involved in the import of serine and threonine into the cell, with the concomitant import of sodium (symport system). The chain is Serine/threonine transporter SstT from Desulfitobacterium hafniense (strain Y51).